A 55-amino-acid chain; its full sequence is Neurotoxin B-IV (55 aa).

A Hydroxyproline modification is found at Pro-10. 4 disulfide bridges follow: Cys-12–Cys-52, Cys-16–Cys-48, Cys-23–Cys-41, and Cys-26–Cys-37.

This sequence belongs to the worm B-toxin family.

It is found in the secreted. Functionally, this toxin increases the excitability of nerves by delaying the inactivation of the voltage-gated sodium channel (Nav). Only acts on some crustacean. Is more abundant, but 15-fold less toxic than neurotoxin B-II. This chain is Neurotoxin B-IV, found in Cerebratulus lacteus (Milky ribbon worm).